Here is a 308-residue protein sequence, read N- to C-terminus: Elongation factor Ts (308 aa).

The interval 80 to 83 is involved in Mg(2+) ion dislocation from EF-Tu; the sequence is TDFV.

This sequence belongs to the EF-Ts family.

The protein resides in the cytoplasm. Functionally, associates with the EF-Tu.GDP complex and induces the exchange of GDP to GTP. It remains bound to the aminoacyl-tRNA.EF-Tu.GTP complex up to the GTP hydrolysis stage on the ribosome. This chain is Elongation factor Ts, found in Erythrobacter litoralis (strain HTCC2594).